The chain runs to 197 residues: Small ribosomal subunit protein uS7 (197 aa).

This sequence belongs to the universal ribosomal protein uS7 family. In terms of assembly, part of the 30S ribosomal subunit.

Its function is as follows. One of the primary rRNA binding proteins, it binds directly to 16S rRNA where it nucleates assembly of the head domain of the 30S subunit. Is located at the subunit interface close to the decoding center. This chain is Small ribosomal subunit protein uS7, found in Methanopyrus kandleri (strain AV19 / DSM 6324 / JCM 9639 / NBRC 100938).